A 128-amino-acid chain; its full sequence is Putative lipid-binding protein At4g00165 (128 aa).

An N-terminal signal peptide occupies residues 1–23; that stretch reads MGISKALRSLLILLLLNITFFFG. 4 cysteine pairs are disulfide-bonded: C34/C90, C46/C76, C56/C75, and C92/C128.

Belongs to the plant LTP family. PEARLI1 subfamily.

It is found in the secreted. In Arabidopsis thaliana (Mouse-ear cress), this protein is Putative lipid-binding protein At4g00165.